The primary structure comprises 87 residues: Phosphocarrier protein HPr (87 aa).

Residues 1–87 (MEKIFKVTSD…ETMKNEGLGE (87 aa)) form the HPr domain. The active-site Pros-phosphohistidine intermediate; alternate is His-14. His-14 bears the Tele-phosphohistidine; alternate mark. The residue at position 45 (Ser-45) is a Phosphoserine; by HPrK/P.

It belongs to the HPr family. In terms of processing, the form phosphorylated at the tele nitrogen (N(epsilon)2), instead of the expected pros nitrogen (N(delta)1), of His-14 is not able to transfer its phosphoryl group to the B.subtilis EIIA-Glc domain. This form may be inactive in PTS-catalyzed sugar transport or target an as yet unknown acceptor molecule in an alternative metabolic process.

The protein resides in the cytoplasm. Phosphorylation on Ser-45 inhibits the phosphoryl transfer from enzyme I to HPr. In terms of biological role, general (non sugar-specific) component of the phosphoenolpyruvate-dependent sugar phosphotransferase system (sugar PTS). This major carbohydrate active-transport system catalyzes the phosphorylation of incoming sugar substrates concomitantly with their translocation across the cell membrane. The phosphoryl group from phosphoenolpyruvate (PEP) is transferred to the phosphoryl carrier protein HPr by enzyme I. Phospho-HPr then transfers it to the PTS EIIA domain. P-Ser-HPr interacts with the catabolite control protein A (CcpA), forming a complex that binds to DNA at the catabolite response elements cre, operator sites preceding a large number of catabolite-regulated genes. Thus, P-Ser-HPr is a corepressor in carbon catabolite repression (CCR), a mechanism that allows bacteria to coordinate and optimize the utilization of available carbon sources. P-Ser-HPr mediates glucose catabolite repression of cry4A toxin expression. The sequence is that of Phosphocarrier protein HPr (ptsH) from Bacillus thuringiensis subsp. israelensis.